The chain runs to 129 residues: Small ribosomal subunit protein uS11 (129 aa).

Belongs to the universal ribosomal protein uS11 family. In terms of assembly, part of the 30S ribosomal subunit. Interacts with proteins S7 and S18. Binds to IF-3.

Functionally, located on the platform of the 30S subunit, it bridges several disparate RNA helices of the 16S rRNA. Forms part of the Shine-Dalgarno cleft in the 70S ribosome. The chain is Small ribosomal subunit protein uS11 from Staphylococcus haemolyticus (strain JCSC1435).